Here is a 314-residue protein sequence, read N- to C-terminus: MTEPLRIVFAGTPEFAAEHLKALLDSPHQIVAVYTQPDRPAGRGQKLMPSPVKQLALQHDVPVMQPPTLRDPAAQAELAALQPDLMVVVAYGLILPQVVLDIPRLGCINSHASLLPRWRGAAPIQRAVQAGDAESGVTVMRMEAGLDTGPMLLKAVTPITAQDTGGTLHDRLAELGPPAVLQAIAGLADGTLVGEVQDDSLANYAHKLNKDEARLDWTRPADELERLVRAFNPWPICHSTLNEETLKVLAADLAEGQGAPGTILGASKDGLIVACGQNALRLTRLQLPGGKPLNFTDLFNSRREKFAIGTVLGQ.

A (6S)-5,6,7,8-tetrahydrofolate-binding site is contributed by 113–116 (SLLP).

It belongs to the Fmt family.

It catalyses the reaction L-methionyl-tRNA(fMet) + (6R)-10-formyltetrahydrofolate = N-formyl-L-methionyl-tRNA(fMet) + (6S)-5,6,7,8-tetrahydrofolate + H(+). Attaches a formyl group to the free amino group of methionyl-tRNA(fMet). The formyl group appears to play a dual role in the initiator identity of N-formylmethionyl-tRNA by promoting its recognition by IF2 and preventing the misappropriation of this tRNA by the elongation apparatus. The polypeptide is Methionyl-tRNA formyltransferase (Pseudomonas syringae pv. syringae (strain B728a)).